A 450-amino-acid chain; its full sequence is Tubulin alpha chain (450 aa).

GTP is bound at residue Q11. The residue at position 40 (K40) is an N6-acetyllysine. 7 residues coordinate GTP: E71, S140, G144, T145, T179, N206, and N228. E71 contacts Mg(2+). E254 is a catalytic residue.

The protein belongs to the tubulin family. As to quaternary structure, dimer of alpha and beta chains. A typical microtubule is a hollow water-filled tube with an outer diameter of 25 nm and an inner diameter of 15 nM. Alpha-beta heterodimers associate head-to-tail to form protofilaments running lengthwise along the microtubule wall with the beta-tubulin subunit facing the microtubule plus end conferring a structural polarity. Microtubules usually have 13 protofilaments but different protofilament numbers can be found in some organisms and specialized cells. Requires Mg(2+) as cofactor. In terms of processing, acetylation of alpha chains at Lys-40 stabilizes microtubules and affects affinity and processivity of microtubule motors. This modification has a role in multiple cellular functions, ranging from cell motility, cell cycle progression or cell differentiation to intracellular trafficking and signaling.

The protein resides in the cytoplasm. It is found in the cytoskeleton. The enzyme catalyses GTP + H2O = GDP + phosphate + H(+). Tubulin is the major constituent of microtubules, a cylinder consisting of laterally associated linear protofilaments composed of alpha- and beta-tubulin heterodimers. Microtubules grow by the addition of GTP-tubulin dimers to the microtubule end, where a stabilizing cap forms. Below the cap, tubulin dimers are in GDP-bound state, owing to GTPase activity of alpha-tubulin. The polypeptide is Tubulin alpha chain (Oxytricha granulifera (Ciliate)).